The sequence spans 475 residues: UDP-glycosyltransferase 101 (475 aa).

H15 functions as the Proton acceptor in the catalytic mechanism. Residue H15 participates in an anthocyanidin binding. Catalysis depends on D117, which acts as the Charge relay. 7 residues coordinate UDP-alpha-D-glucose: A345, Q347, H362, W365, N366, S367, and E370. G385 is a binding site for an anthocyanidin. Residues E386 and Q387 each coordinate UDP-alpha-D-glucose.

It belongs to the UDP-glycosyltransferase family.

The enzyme catalyses (20S)-protopanaxadiol + UDP-alpha-D-glucose = (20S)-ginsenoside C-K + UDP + H(+). It catalyses the reaction (20S)-ginsenoside Rg3 + UDP-alpha-D-glucose = (20S)-ginsenoside Rd + UDP + H(+). It carries out the reaction (20S)-protopanaxatriol + UDP-alpha-D-glucose = (20S)-ginsenoside F1 + UDP + H(+). The catalysed reaction is (20S)-ginsenoside F1 + UDP-alpha-D-glucose = (20S)-ginsenoside Rg1 + UDP + H(+). It participates in secondary metabolite biosynthesis; terpenoid biosynthesis. Component of the dammarane-type triterpene saponins (e.g. ginsenosides or panaxosides) biosynthetic pathway. Glycosyltransferase that catalyzes the biosynthesis of ginsenoside F1 from protopanaxatriol (PPT) and the conversion of ginsenoside F1 to ginsenoside Rg1. Triggers C20-OH glycosylation of ginsenoside Rg3 to produce ginsenoside Rd. Mediates the conversion of protopanaxadiol (PPD) to the ginsenoside compound K. The protein is UDP-glycosyltransferase 101 of Panax ginseng (Korean ginseng).